The sequence spans 281 residues: Probable short-chain type dehydrogenase/reductase blr2146 (281 aa).

10 to 34 (VVTGAGAGIGKACALAIAREGGRVV) is a binding site for NAD(+). Serine 146 serves as a coordination point for substrate. The Proton acceptor role is filled by tyrosine 159. Residues 261–281 (GNSRAARPAGETAEADAAPRC) are disordered.

The protein belongs to the short-chain dehydrogenases/reductases (SDR) family.

The protein is Probable short-chain type dehydrogenase/reductase blr2146 of Bradyrhizobium diazoefficiens (strain JCM 10833 / BCRC 13528 / IAM 13628 / NBRC 14792 / USDA 110).